We begin with the raw amino-acid sequence, 241 residues long: Keratin-associated protein 5-5 (241 aa).

15 consecutive repeat copies span residues 35–38, 41–44, 47–50, 105–108, 115–118, 133–136, 143–146, 161–164, 171–174, 181–184, 191–194, 201–204, 211–214, 221–224, and 231–234. Positions 35–234 are 15 X 4 AA repeats of C-C-X-P; that stretch reads CCKPVCCCKP…CCCQSSCCAP (200 aa).

Belongs to the KRTAP type 5 family. In terms of assembly, interacts with hair keratins.

In the hair cortex, hair keratin intermediate filaments are embedded in an interfilamentous matrix, consisting of hair keratin-associated protein (KRTAP), which are essential for the formation of a rigid and resistant hair shaft through their extensive disulfide bond cross-linking with abundant cysteine residues of hair keratins. The matrix proteins include the high-sulfur and high-glycine-tyrosine keratins. This chain is Keratin-associated protein 5-5, found in Mus musculus (Mouse).